The primary structure comprises 326 residues: tRNA uridine(34) hydroxylase (326 aa).

In terms of domain architecture, Rhodanese spans 123–217 (SDPDVLLVDT…YLEEVPEENS (95 aa)). C177 acts as the Cysteine persulfide intermediate in catalysis. Residues 276–320 (EEQKSRFREREKQVQLANERGETHVGGDAAKLIEQRKQEKKEKKQ) show a composition bias toward basic and acidic residues. The tract at residues 276 to 326 (EEQKSRFREREKQVQLANERGETHVGGDAAKLIEQRKQEKKEKKQQQRSSK) is disordered.

The protein belongs to the TrhO family.

It catalyses the reaction uridine(34) in tRNA + AH2 + O2 = 5-hydroxyuridine(34) in tRNA + A + H2O. In terms of biological role, catalyzes oxygen-dependent 5-hydroxyuridine (ho5U) modification at position 34 in tRNAs. In Aliivibrio salmonicida (strain LFI1238) (Vibrio salmonicida (strain LFI1238)), this protein is tRNA uridine(34) hydroxylase.